We begin with the raw amino-acid sequence, 119 residues long: Large ribosomal subunit protein uL18 (119 aa).

The segment at 1 to 25 (MITKIDKNKVRKKRHARVRSKISGT) is disordered. A compositionally biased stretch (basic residues) spans 9 to 20 (KVRKKRHARVRS).

It belongs to the universal ribosomal protein uL18 family. As to quaternary structure, part of the 50S ribosomal subunit; part of the 5S rRNA/L5/L18/L25 subcomplex. Contacts the 5S and 23S rRNAs.

Its function is as follows. This is one of the proteins that bind and probably mediate the attachment of the 5S RNA into the large ribosomal subunit, where it forms part of the central protuberance. The sequence is that of Large ribosomal subunit protein uL18 from Listeria innocua serovar 6a (strain ATCC BAA-680 / CLIP 11262).